Reading from the N-terminus, the 227-residue chain is Cytochrome c oxidase subunit 2 (227 aa).

Residues 1–14 (MAYPFQLGLQDATS) are Mitochondrial intermembrane-facing. Residues 15 to 45 (PIMEELTNFHDHTLMIVFLISSLVLYIISLM) form a helical membrane-spanning segment. The Mitochondrial matrix segment spans residues 46-59 (LTTKLTHTSTMDAQ). The helical transmembrane segment at 60-87 (EVETIWTILPAVILILIALPSLRILYMM) threads the bilayer. The Mitochondrial intermembrane portion of the chain corresponds to 88-227 (DEINNPVLTV…HFENWSASMI (140 aa)). 6 residues coordinate Cu cation: His-161, Cys-196, Glu-198, Cys-200, His-204, and Met-207. Glu-198 lines the Mg(2+) pocket.

It belongs to the cytochrome c oxidase subunit 2 family. In terms of assembly, component of the cytochrome c oxidase (complex IV, CIV), a multisubunit enzyme composed of 14 subunits. The complex is composed of a catalytic core of 3 subunits MT-CO1, MT-CO2 and MT-CO3, encoded in the mitochondrial DNA, and 11 supernumerary subunits COX4I, COX5A, COX5B, COX6A, COX6B, COX6C, COX7A, COX7B, COX7C, COX8 and NDUFA4, which are encoded in the nuclear genome. The complex exists as a monomer or a dimer and forms supercomplexes (SCs) in the inner mitochondrial membrane with NADH-ubiquinone oxidoreductase (complex I, CI) and ubiquinol-cytochrome c oxidoreductase (cytochrome b-c1 complex, complex III, CIII), resulting in different assemblies (supercomplex SCI(1)III(2)IV(1) and megacomplex MCI(2)III(2)IV(2)). Found in a complex with TMEM177, COA6, COX18, COX20, SCO1 and SCO2. Interacts with TMEM177 in a COX20-dependent manner. Interacts with COX20. Interacts with COX16. Requires Cu cation as cofactor.

The protein resides in the mitochondrion inner membrane. It catalyses the reaction 4 Fe(II)-[cytochrome c] + O2 + 8 H(+)(in) = 4 Fe(III)-[cytochrome c] + 2 H2O + 4 H(+)(out). Functionally, component of the cytochrome c oxidase, the last enzyme in the mitochondrial electron transport chain which drives oxidative phosphorylation. The respiratory chain contains 3 multisubunit complexes succinate dehydrogenase (complex II, CII), ubiquinol-cytochrome c oxidoreductase (cytochrome b-c1 complex, complex III, CIII) and cytochrome c oxidase (complex IV, CIV), that cooperate to transfer electrons derived from NADH and succinate to molecular oxygen, creating an electrochemical gradient over the inner membrane that drives transmembrane transport and the ATP synthase. Cytochrome c oxidase is the component of the respiratory chain that catalyzes the reduction of oxygen to water. Electrons originating from reduced cytochrome c in the intermembrane space (IMS) are transferred via the dinuclear copper A center (CU(A)) of subunit 2 and heme A of subunit 1 to the active site in subunit 1, a binuclear center (BNC) formed by heme A3 and copper B (CU(B)). The BNC reduces molecular oxygen to 2 water molecules using 4 electrons from cytochrome c in the IMS and 4 protons from the mitochondrial matrix. This Batomys granti (Luzon hairy-tailed rat) protein is Cytochrome c oxidase subunit 2 (MT-CO2).